A 463-amino-acid chain; its full sequence is L-seryl-tRNA(Sec) selenium transferase (463 aa).

Lys295 carries the N6-(pyridoxal phosphate)lysine modification.

The protein belongs to the SelA family. Homodecamer; pentamer of dimers. Binds only one seryl-tRNA(Sec) per dimer. It depends on pyridoxal 5'-phosphate as a cofactor.

Its subcellular location is the cytoplasm. The enzyme catalyses L-seryl-tRNA(Sec) + selenophosphate + H(+) = L-selenocysteinyl-tRNA(Sec) + phosphate. It participates in aminoacyl-tRNA biosynthesis; selenocysteinyl-tRNA(Sec) biosynthesis; selenocysteinyl-tRNA(Sec) from L-seryl-tRNA(Sec) (bacterial route): step 1/1. In terms of biological role, converts seryl-tRNA(Sec) to selenocysteinyl-tRNA(Sec) required for selenoprotein biosynthesis. The sequence is that of L-seryl-tRNA(Sec) selenium transferase from Escherichia coli O6:H1 (strain CFT073 / ATCC 700928 / UPEC).